A 186-amino-acid chain; its full sequence is Ribosome-recycling factor (186 aa).

This sequence belongs to the RRF family.

Its subcellular location is the cytoplasm. Its function is as follows. Responsible for the release of ribosomes from messenger RNA at the termination of protein biosynthesis. May increase the efficiency of translation by recycling ribosomes from one round of translation to another. This is Ribosome-recycling factor from Rickettsia rickettsii (strain Iowa).